The sequence spans 493 residues: Ketol-acid reductoisomerase (NADP(+)) (493 aa).

Residues 14–208 (LDQLGRCRFM…GGHRAGVLES (195 aa)) enclose the KARI N-terminal Rossmann domain. Residues 45–48 (CGAQ), Arg68, Arg76, Ser78, and 108–110 (DKQ) each bind NADP(+). The active site involves His132. Residue Gly158 participates in NADP(+) binding. 2 consecutive KARI C-terminal knotted domains span residues 209–345 (SFVA…APKG) and 346–486 (ENIK…MTDM). Mg(2+)-binding residues include Asp217, Glu221, Glu390, and Glu394. A substrate-binding site is contributed by Ser415.

This sequence belongs to the ketol-acid reductoisomerase family. Mg(2+) is required as a cofactor.

The enzyme catalyses (2R)-2,3-dihydroxy-3-methylbutanoate + NADP(+) = (2S)-2-acetolactate + NADPH + H(+). The catalysed reaction is (2R,3R)-2,3-dihydroxy-3-methylpentanoate + NADP(+) = (S)-2-ethyl-2-hydroxy-3-oxobutanoate + NADPH + H(+). Its pathway is amino-acid biosynthesis; L-isoleucine biosynthesis; L-isoleucine from 2-oxobutanoate: step 2/4. The protein operates within amino-acid biosynthesis; L-valine biosynthesis; L-valine from pyruvate: step 2/4. In terms of biological role, involved in the biosynthesis of branched-chain amino acids (BCAA). Catalyzes an alkyl-migration followed by a ketol-acid reduction of (S)-2-acetolactate (S2AL) to yield (R)-2,3-dihydroxy-isovalerate. In the isomerase reaction, S2AL is rearranged via a Mg-dependent methyl migration to produce 3-hydroxy-3-methyl-2-ketobutyrate (HMKB). In the reductase reaction, this 2-ketoacid undergoes a metal-dependent reduction by NADPH to yield (R)-2,3-dihydroxy-isovalerate. The polypeptide is Ketol-acid reductoisomerase (NADP(+)) (Histophilus somni (strain 129Pt) (Haemophilus somnus)).